The chain runs to 507 residues: tRNA (guanine(10)-N(2))-methyltransferase TRMT11 (507 aa).

Residues 459–475 (EKTKKKEQKKKSVENHL) are compositionally biased toward basic and acidic residues. The interval 459–507 (EKTKKKEQKKKSVENHLKSKNNNDVINNNSNDTNSNNNCNNENNIENQK) is disordered. The span at 480 to 507 (NNDVINNNSNDTNSNNNCNNENNIENQK) shows a compositional bias: low complexity.

This sequence belongs to the class I-like SAM-binding methyltransferase superfamily. TRM11 methyltransferase family. In terms of assembly, part of the heterodimeric TRMT11-TRM112 methyltransferase complex; this complex forms an active tRNA methyltransferase, where TRMT112 acts as an activator of the catalytic subunit TRMT11.

Its subcellular location is the cytoplasm. The catalysed reaction is guanosine(10) in tRNA + S-adenosyl-L-methionine = N(2)-methylguanosine(10) in tRNA + S-adenosyl-L-homocysteine + H(+). Its function is as follows. Catalytic subunit of the TRMT11-TRM112 methyltransferase complex, that specifically mediates the S-adenosyl-L-methionine-dependent N(2)-methylation of guanosine nucleotide at position 10 (m2G10) in tRNAs. This is one of the major tRNA (guanine-N(2))-methyltransferases. The polypeptide is tRNA (guanine(10)-N(2))-methyltransferase TRMT11 (trmt11) (Dictyostelium discoideum (Social amoeba)).